A 305-amino-acid chain; its full sequence is ADP,ATP carrier protein (305 aa).

Solcar repeat units follow at residues serine 8–methionine 101, lysine 112–leucine 204, and asparagine 212–isoleucine 298. 5 helical membrane-spanning segments follow: residues phenylalanine 10–leucine 37, threonine 78–phenylalanine 102, tyrosine 110–leucine 130, phenylalanine 180–leucine 201, and leucine 215–leucine 235. ADP is bound by residues arginine 83 and lysine 95. Residue arginine 239 participates in ADP binding. Positions arginine 239–methionine 244 are important for transport activity. The Nucleotide carrier signature motif motif lies at arginine 239–methionine 244. The helical transmembrane segment at cysteine 275–leucine 295 threads the bilayer.

The protein belongs to the mitochondrial carrier (TC 2.A.29) family. In terms of assembly, monomer.

The protein resides in the mitochondrion inner membrane. The enzyme catalyses ADP(in) + ATP(out) = ADP(out) + ATP(in). The matrix-open state (m-state) is inhibited by the membrane-permeable bongkrekic acid (BKA). The cytoplasmic-open state (c-state) is inhibited by the membrane-impermeable toxic inhibitor carboxyatractyloside (CATR). In terms of biological role, ADP:ATP antiporter that mediates import of ADP into the mitochondrial matrix for ATP synthesis, and export of ATP out to fuel the cell. Cycles between the cytoplasmic-open state (c-state) and the matrix-open state (m-state): operates by the alternating access mechanism with a single substrate-binding site intermittently exposed to either the cytosolic (c-state) or matrix (m-state) side of the inner mitochondrial membrane. The chain is ADP,ATP carrier protein (AAC) from Kluyveromyces lactis (strain ATCC 8585 / CBS 2359 / DSM 70799 / NBRC 1267 / NRRL Y-1140 / WM37) (Yeast).